The following is a 271-amino-acid chain: Ubiquitin thioesterase OTUB1 (271 aa).

An N-acetylalanine modification is found at alanine 2. At serine 16 the chain carries Phosphoserine. Tyrosine 26 carries the phosphotyrosine modification. One can recognise an OTU domain in the interval 80–271 (SYIRKTRPDG…RPGHYDILYK (192 aa)). Aspartate 88 is a catalytic residue. The active-site Nucleophile is cysteine 91. 2 ubiquitin-conjugating enzyme E2 binding regions span residues 130–138 (FTEFTIEDF) and 169–177 (DYLVVYLRL). The tract at residues 189-195 (FFEHFIE) is free ubiquitin binding. Residues 206–213 (QEVEPMCK) are ubiquitin-conjugating enzyme E2 binding. Free ubiquitin binding regions lie at residues 214–221 (ESDHIHII) and 245–251 (NPHVFPE). Histidine 265 is a catalytic residue.

The protein belongs to the peptidase C65 family. In terms of assembly, interacts with RNF128. Forms a ternary complex with RNF128 and USP8. Interacts with FUS and RACK1. Interacts with UBE2D1/UBCH5A, UBE2W/UBC16 and UBE2N/UBC13. Post-translationally, phosphorylation at Tyr-26 by SRC and SRMS promotes deubiquitination of RPTOR via a non-catalytic process.

The protein localises to the cytoplasm. It catalyses the reaction Thiol-dependent hydrolysis of ester, thioester, amide, peptide and isopeptide bonds formed by the C-terminal Gly of ubiquitin (a 76-residue protein attached to proteins as an intracellular targeting signal).. With respect to regulation, by free ubiquitin: binding of free ubiquitin triggers conformational changes in the OTU domain and formation of a ubiquitin-binding helix in the N-terminus, promoting binding of the conjugated donor ubiquitin in UBE2N/UBC13 to OTUB1. Its function is as follows. Hydrolase that can specifically remove compared to 'Lys-48'-linked conjugated ubiquitin from proteins and plays an important regulatory role at the level of protein turnover by preventing degradation. Regulator of T-cell anergy, a phenomenon that occurs when T-cells are rendered unresponsive to antigen rechallenge and no longer respond to their cognate antigen. Acts via its interaction with RNF128/GRAIL. Surprisingly, it regulates RNF128-mediated ubiquitination, but does not deubiquitinate polyubiquitinated RNF128. Deubiquitinates estrogen receptor alpha (ESR1). Mediates deubiquitination of 'Lys-48'-linked polyubiquitin chains, but not 'Lys-63'-linked polyubiquitin chains. Not able to cleave di-ubiquitin. Also capable of removing NEDD8 from NEDD8 conjugates, but with a much lower preference compared to 'Lys-48'-linked ubiquitin. In terms of biological role, plays a key non-catalytic role in DNA repair regulation by inhibiting activity of RNF168, an E3 ubiquitin-protein ligase that promotes accumulation of 'Lys-63'-linked histone H2A and H2AX at DNA damage sites. Inhibits RNF168 independently of ubiquitin thioesterase activity by binding and inhibiting UBE2N/UBC13, the E2 partner of RNF168, thereby limiting spreading of 'Lys-63'-linked histone H2A and H2AX marks. Inhibition occurs by binding to free ubiquitin: free ubiquitin acts as an allosteric regulator that increases affinity for UBE2N/UBC13 and disrupts interaction with UBE2V1. The OTUB1-UBE2N/UBC13-free ubiquitin complex adopts a configuration that mimics a cleaved 'Lys48'-linked di-ubiquitin chain. Acts as a regulator of mTORC1 and mTORC2 complexes. When phosphorylated at Tyr-26, acts as an activator of the mTORC1 complex by mediating deubiquitination of RPTOR via a non-catalytic process: acts by binding and inhibiting the activity of the ubiquitin-conjugating enzyme E2 (UBE2D1/UBCH5A, UBE2W/UBC16 and UBE2N/UBC13), thereby preventing ubiquitination of RPTOR. Can also act as an inhibitor of the mTORC1 and mTORC2 complexes in response to amino acids by mediating non-catalytic deubiquitination of DEPTOR. This Mus musculus (Mouse) protein is Ubiquitin thioesterase OTUB1 (Otub1).